The sequence spans 87 residues: Large ribosomal subunit protein bL27 (87 aa).

Residues 1–11 (MASKASGGSTR) are compositionally biased toward polar residues. A disordered region spans residues 1 to 21 (MASKASGGSTRNGRDSNSKRL).

It belongs to the bacterial ribosomal protein bL27 family.

This is Large ribosomal subunit protein bL27 from Hydrogenobaculum sp. (strain Y04AAS1).